A 40-amino-acid polypeptide reads, in one-letter code: Hemoglobin subunit alpha-2 (40 aa).

In terms of domain architecture, Globin spans 1–40 (VGPHLDDYGGEALHRNFEVYPQTKTYFPHFDASAGSNQLK).

This sequence belongs to the globin family. In terms of assembly, heterotetramer of two alpha chains and two beta chains. In terms of tissue distribution, red blood cells.

Involved in oxygen transport from the lung to the various peripheral tissues. In Saara hardwickii (Indian spiny-tailed lizard), this protein is Hemoglobin subunit alpha-2.